Consider the following 149-residue polypeptide: Cytochrome c-type biogenesis protein CcmE (149 aa).

The Cytoplasmic segment spans residues 1-7 (MTRKQKR). A helical; Signal-anchor for type II membrane protein transmembrane segment spans residues 8–28 (LAVIAGGMGFIATAVLLVLFA). The Periplasmic portion of the chain corresponds to 29–149 (FSQSVAYFYM…GVWKGEEASQ (121 aa)). Heme is bound by residues His123 and Tyr127.

Belongs to the CcmE/CycJ family.

It is found in the cell inner membrane. In terms of biological role, heme chaperone required for the biogenesis of c-type cytochromes. Transiently binds heme delivered by CcmC and transfers the heme to apo-cytochromes in a process facilitated by CcmF and CcmH. The chain is Cytochrome c-type biogenesis protein CcmE from Rhizobium rhizogenes (strain K84 / ATCC BAA-868) (Agrobacterium radiobacter).